The sequence spans 276 residues: Syntaxin-12 (276 aa).

Residue serine 2 is modified to N-acetylserine. Topologically, residues 2–248 (SYGPLDMYRN…RAAYYQKKSR (247 aa)) are cytoplasmic. A coiled-coil region spans residues 33 to 131 (IQRISQATAQ…RRVSEKEKES (99 aa)). A phosphoserine mark is found at serine 139, serine 142, serine 218, and serine 225. In terms of domain architecture, t-SNARE coiled-coil homology spans 178–240 (LELIKERETA…ERATEQLQRA (63 aa)). Residues 249-269 (KKMCILVLVLSVIIVILGLII) traverse the membrane as a helical; Anchor for type IV membrane protein segment. The Vesicular segment spans residues 270 to 276 (WLVYKTK).

It belongs to the syntaxin family. In terms of assembly, associates with the BLOC-1 complex. Interacts with BLOC1S6. Interacts with NAPA and SNAP23. Identified in a complex containing STX6, STX12, VAMP4 and VTI1A. Interacts with GRIPAP1. Forms a complex with GRIP1, GRIA2 and NSG1; controls the intracellular fate of AMPAR and the endosomal sorting of the GRIA2 subunit toward recycling and membrane targeting. Interacts with NSG1. Interacts with TPC1. Interacts (via N-terminus) with VPS13B.

Its subcellular location is the endosome membrane. It localises to the golgi apparatus membrane. The protein localises to the endomembrane system. The protein resides in the early endosome membrane. It is found in the recycling endosome membrane. Its function is as follows. SNARE promoting fusion of transport vesicles with target membranes. Together with SNARE STX6, promotes movement of vesicles from endosomes to the cell membrane, and may therefore function in the endocytic recycling pathway. Through complex formation with GRIP1, GRIA2 and NSG1 controls the intracellular fate of AMPAR and the endosomal sorting of the GRIA2 subunit toward recycling and membrane targeting. The polypeptide is Syntaxin-12 (STX12) (Pongo abelii (Sumatran orangutan)).